Reading from the N-terminus, the 203-residue chain is MDHSKQQNASITQAQAEEAVRTLLRWAGEDPTREGLLDTPRRVVEAYGDWFSGYREDPHDYLQRTFEEISCYDEMIVLRNITYESHCEHHMAPIIGKVHVGYLPNGKVVGISKLARVVESYARRFQIQEKMTAQIAACIQDTLTPRGVGVVIEGAHACMTTRGIHKRGVSMVTSKMLGTFREDARTRAEFLQFIEVGTNVIDL.

The Zn(2+) site is built by Cys87, His90, and Cys158.

Belongs to the GTP cyclohydrolase I family. As to quaternary structure, homomer.

The catalysed reaction is GTP + H2O = 7,8-dihydroneopterin 3'-triphosphate + formate + H(+). The protein operates within cofactor biosynthesis; 7,8-dihydroneopterin triphosphate biosynthesis; 7,8-dihydroneopterin triphosphate from GTP: step 1/1. The chain is GTP cyclohydrolase 1 from Xylella fastidiosa (strain M23).